The primary structure comprises 170 residues: Peptide deformylase 2 (170 aa).

The Fe cation site is built by Cys94 and His136. Residue Glu137 is part of the active site. His140 is a binding site for Fe cation.

This sequence belongs to the polypeptide deformylase family. Fe(2+) serves as cofactor.

It carries out the reaction N-terminal N-formyl-L-methionyl-[peptide] + H2O = N-terminal L-methionyl-[peptide] + formate. Removes the formyl group from the N-terminal Met of newly synthesized proteins. Requires at least a dipeptide for an efficient rate of reaction. N-terminal L-methionine is a prerequisite for activity but the enzyme has broad specificity at other positions. This chain is Peptide deformylase 2, found in Xanthomonas campestris pv. campestris (strain ATCC 33913 / DSM 3586 / NCPPB 528 / LMG 568 / P 25).